A 547-amino-acid chain; its full sequence is Chaperonin GroEL (547 aa).

ATP contacts are provided by residues 30–33 (TLGP), K51, 87–91 (DGTTT), G415, and D496. Residues 527-547 (SDKAEPMPMRGGMGGMGGMDF) form a disordered region. Residues 537–547 (GGMGGMGGMDF) show a composition bias toward gly residues.

This sequence belongs to the chaperonin (HSP60) family. In terms of assembly, forms a cylinder of 14 subunits composed of two heptameric rings stacked back-to-back. Interacts with the co-chaperonin GroES.

The protein localises to the cytoplasm. The enzyme catalyses ATP + H2O + a folded polypeptide = ADP + phosphate + an unfolded polypeptide.. In terms of biological role, together with its co-chaperonin GroES, plays an essential role in assisting protein folding. The GroEL-GroES system forms a nano-cage that allows encapsulation of the non-native substrate proteins and provides a physical environment optimized to promote and accelerate protein folding. This is Chaperonin GroEL from Rickettsia africae (strain ESF-5).